A 403-amino-acid polypeptide reads, in one-letter code: Tripartite motif-containing protein 59 (403 aa).

Residues 10-60 (CPICYSIFEDPRVLPCSHTFCRNCLENILQASGNFYIWRPLRIPLKCPNCR) form an RING-type zinc finger. The B box-type zinc-finger motif lies at 92 to 134 (PDIVTCPEHYRQPLNVYCLLDKKLVCGHCLTIGQHHGHPIDDL). Zn(2+) is bound by residues C97, H100, C120, and H126. A coiled-coil region spans residues 163–246 (LIEKLKEQKS…ALTISLQEES (84 aa)). Residues 329–349 (ILNIVVVTLISVILMSILFFN) traverse the membrane as a helical segment.

It belongs to the TRIM/RBCC family. As to quaternary structure, interacts with ECSIT.

The protein localises to the endoplasmic reticulum membrane. It catalyses the reaction S-ubiquitinyl-[E2 ubiquitin-conjugating enzyme]-L-cysteine + [acceptor protein]-L-lysine = [E2 ubiquitin-conjugating enzyme]-L-cysteine + N(6)-ubiquitinyl-[acceptor protein]-L-lysine.. The protein operates within protein modification; protein ubiquitination. In terms of biological role, E3 ubiquitin ligase involved in different processes such as development and immune response. Serves as a negative regulator for innate immune signaling pathways by suppressing RLR-induced activation of IRF3/7 and NF-kappa-B via interaction with adapter ECSIT. Regulates autophagy through modulating both the transcription and the ubiquitination of BECN1. On the one hand, regulates the transcription of BECN1 through negatively modulating the NF-kappa-B pathway. On the other hand, regulates TRAF6-mediated 'Lys-63'-linked ubiquitination of BECN1, thus affecting the formation of the BECN1-PIK3C3 complex. In addition, mediates 'Lys-48'-linked ubiquitination of TRAF6 and thereby promotes TRAF6 proteasomal degradation. Also acts as a critical regulator for early embryo development from blastocyst stage to gastrula through modulating F-actin assembly and WASH1 'Lys-63'-linked ubiquitination. This Homo sapiens (Human) protein is Tripartite motif-containing protein 59 (TRIM59).